A 376-amino-acid polypeptide reads, in one-letter code: MKILLFICGEGLGHTGRCLALGKEFLAAGHEVNFGAYGYSKGLVQKTGYSAYEIPSEIKLAGEAGTFDIRKSIKETLNNLSPSGFRKILRLIEKLDPDVVLSDGYYTGILAAQKRKVPVYFIGHQFNMEEFFWKKGLFAGIAGIFVKRFYNYVFSSVDGIIVPDYPLPYSVNRKNFTISRAVNDNIFFSGPLIRCRYQEAGEKAFKRPNVLSTIGAFGYRAAVFRNVLEAAKLDPSIYYTFISGPEIDPEQFSKVPENVEFTGFTENPFPYYKGSDLVITAGGHGTIMESLAFGLPILSFPDEKHAEQENNASVLEEAGYGKRMSYLTPPEVILACIREIFEDENYSKKTRRLMELAEVLDGPAAVRKFLEEKHRG.

The protein belongs to the glycosyltransferase 28 family.

This is an uncharacterized protein from Methanosarcina mazei (strain ATCC BAA-159 / DSM 3647 / Goe1 / Go1 / JCM 11833 / OCM 88) (Methanosarcina frisia).